Here is a 301-residue protein sequence, read N- to C-terminus: ATP synthase gamma chain (301 aa).

It belongs to the ATPase gamma chain family. As to quaternary structure, F-type ATPases have 2 components, CF(1) - the catalytic core - and CF(0) - the membrane proton channel. CF(1) has five subunits: alpha(3), beta(3), gamma(1), delta(1), epsilon(1). CF(0) has three main subunits: a, b and c.

Its subcellular location is the cell inner membrane. In terms of biological role, produces ATP from ADP in the presence of a proton gradient across the membrane. The gamma chain is believed to be important in regulating ATPase activity and the flow of protons through the CF(0) complex. The chain is ATP synthase gamma chain from Helicobacter pylori (strain J99 / ATCC 700824) (Campylobacter pylori J99).